The primary structure comprises 63 residues: Metallothionein-1 (63 aa).

Repeats lie at residues 23–30 (CGDKCECK) and 56–63 (CGDKCECK).

Belongs to the metallothionein superfamily. Type 9 family.

Functionally, the metallothioneins are involved in the cellular sequestration of toxic metal ions. The chain is Metallothionein-1 (MT-I) from Candida glabrata (strain ATCC 2001 / BCRC 20586 / JCM 3761 / NBRC 0622 / NRRL Y-65 / CBS 138) (Yeast).